Consider the following 172-residue polypeptide: Methylated-DNA--protein-cysteine methyltransferase (172 aa).

The active-site Nucleophile; methyl group acceptor is cysteine 142.

The protein belongs to the MGMT family.

The protein resides in the cytoplasm. The catalysed reaction is a 6-O-methyl-2'-deoxyguanosine in DNA + L-cysteinyl-[protein] = S-methyl-L-cysteinyl-[protein] + a 2'-deoxyguanosine in DNA. The enzyme catalyses a 4-O-methyl-thymidine in DNA + L-cysteinyl-[protein] = a thymidine in DNA + S-methyl-L-cysteinyl-[protein]. Functionally, involved in the cellular defense against the biological effects of O6-methylguanine (O6-MeG) and O4-methylthymine (O4-MeT) in DNA. Repairs the methylated nucleobase in DNA by stoichiometrically transferring the methyl group to a cysteine residue in the enzyme. This is a suicide reaction: the enzyme is irreversibly inactivated. The chain is Methylated-DNA--protein-cysteine methyltransferase from Pyrococcus abyssi (strain GE5 / Orsay).